The sequence spans 405 residues: L-rhamnonate dehydratase (405 aa).

Substrate is bound by residues histidine 33 and arginine 59. Residues aspartate 226, glutamate 252, and glutamate 280 each coordinate Mg(2+). Histidine 329 acts as the Proton acceptor in catalysis. Position 349 (glutamate 349) interacts with substrate.

It belongs to the mandelate racemase/muconate lactonizing enzyme family. RhamD subfamily. Homooctamer; tetramer of dimers. The cofactor is Mg(2+).

The catalysed reaction is L-rhamnonate = 2-dehydro-3-deoxy-L-rhamnonate + H2O. In terms of biological role, catalyzes the dehydration of L-rhamnonate to 2-keto-3-deoxy-L-rhamnonate (KDR). The polypeptide is L-rhamnonate dehydratase (Shigella boydii serotype 4 (strain Sb227)).